The primary structure comprises 188 residues: HGPRTase-like protein (188 aa).

This sequence belongs to the purine/pyrimidine phosphoribosyltransferase family. Archaeal HPRT subfamily.

Its function is as follows. May catalyze a purine salvage reaction, the substrate is unknown. The chain is HGPRTase-like protein from Halobacterium salinarum (strain ATCC 29341 / DSM 671 / R1).